A 373-amino-acid polypeptide reads, in one-letter code: MAEVGPGRVTVSRLGRGLRLGHRRPQTWEISDSDGEGVPAREVGTQAPSPAGERRAAAKALRADQVLGRLVVCVDPAVLEDAGSDILMEALGTLGCECRIEPQHQARSLQWNVVRPDPAPSNVPLEAKAENEQEQLLLLEPQEFLQGAAQLTQITDPPCSIPWLSPKSLTRSHLAVIGLDAYLWSHQLSSQKTWQLKKSKEAHARGAISWAEVEEILVLLQLHANLDVLLMASWQELSQYVCAFTRALSQLPSKQHRDSQAFSFCTAGHWASGQQVTRDGSGLRGVWWRQIRQFNRVSPAVADAVVTAFPSPRLLQQALLDCSTEQERLSLLADLPVKAHKGKQPRRVGPDLSRRICIFLTTTNPDLLLDLSS.

The disordered stretch occupies residues 24 to 52 (RPQTWEISDSDGEGVPAREVGTQAPSPAG). Residues 47–260 (APSPAGERRA…LPSKQHRDSQ (214 aa)) form a nuclease-like domain; forms the post-nick DNA binding interface and is involved in DNA recognition and bending region. The helix-hairpin-helix (2HhH); forms the pre-nick DNA binding interface and is involved in DNA recognition and bending stretch occupies residues 282-373 (GLRGVWWRQI…NPDLLLDLSS (92 aa)).

It belongs to the EME1/MMS4 family. In terms of assembly, part of the heterodimeric MUS81-EME2 complex; the complex forms specifically during the DNA replication phase of the cell cycle.

The protein resides in the nucleus. Non-catalytic subunit of the structure-specific, heterodimeric DNA endonuclease MUS81-EME2 which is involved in the maintenance of genome stability. In the complex, EME2 is required for DNA cleavage, participating in DNA recognition and bending. MUS81-EME2 cleaves 3'-flaps and nicked Holliday junctions, and exhibit limited endonuclease activity with 5' flaps and nicked double-stranded DNAs. MUS81-EME2 which is active during the replication of DNA is more specifically involved in replication fork processing. Replication forks frequently encounter obstacles to their passage, including DNA base lesions, DNA interstrand cross-links, difficult-to-replicate sequences, transcription bubbles, or tightly bound proteins. One mechanism for the restart of a stalled replication fork involves nucleolytic cleavage mediated by the MUS81-EME2 endonuclease. By acting upon the stalled fork, MUS81-EME2 generates a DNA double-strand break (DSB) that can be repaired by homologous recombination, leading to the restoration of an active fork. MUS81-EME2 could also function in telomere maintenance. In Mus musculus (Mouse), this protein is Structure-specific endonuclease subunit EME2.